We begin with the raw amino-acid sequence, 333 residues long: Taste receptor type 2 member 123 (333 aa).

The Extracellular segment spans residues 1–14; the sequence is MFSQKTNYSHLFTF. Residues 15 to 37 form a helical membrane-spanning segment; the sequence is SIIFYVEIVTGILGNGFIALVNI. The Cytoplasmic segment spans residues 38–57; the sequence is MDWLKRRRISTADQILTALA. A helical transmembrane segment spans residues 58-77; the sequence is LTRLIYVWSVLICILLLFLC. Residues 78–91 are Extracellular-facing; it reads PHLSMRPEMFTAIG. The helical transmembrane segment at 92-114 threads the bilayer; that stretch reads VIWVVDNHFSIWLATCLGVFYFL. The Cytoplasmic portion of the chain corresponds to 115–133; sequence KIASFSNSLFLYLKWRVKK. Residues 134 to 156 traverse the membrane as a helical segment; that stretch reads VVLMIILISLIFLMLNISSLGMY. Residues 157-204 are Extracellular-facing; sequence DHFSIDVYEGNMSYNLVDSTHFPRIFLFTNSSKVFLIANSSHVFLPIN. 3 N-linked (GlcNAc...) asparagine glycosylation sites follow: N167, N186, and N195. The chain crosses the membrane as a helical span at residues 205–227; it reads SLFMLIPFTVSLVAFFVLFLSLW. The Cytoplasmic portion of the chain corresponds to 228 to 250; that stretch reads KHHKKMQVNAKGPRDASTMAHTK. Residues 251–273 traverse the membrane as a helical segment; the sequence is ALQIGFSFLLLYAIYLLFIITGI. Residues 274 to 282 are Extracellular-facing; that stretch reads LNLDLMRCI. Residues 283-305 form a helical membrane-spanning segment; the sequence is VILLFDHISGAVFSISHSFVLIL. At 306–333 the chain is on the cytoplasmic side; that stretch reads GNSKLRQATLSVLPCLRCRSKDMDTVVF.

This sequence belongs to the G-protein coupled receptor T2R family. Expressed in subsets of taste receptor cells of the tongue and palate epithelium and exclusively in gustducin-positive cells. Expressed in the antrum and fundus (part of the stomach), duodenum and in gastric endocrine cells.

It localises to the membrane. Its function is as follows. Gustducin-coupled receptor implicated in the perception of bitter compounds in the oral cavity and the gastrointestinal tract. Signals through PLCB2 and the calcium-regulated cation channel TRPM5. The polypeptide is Taste receptor type 2 member 123 (Tas2r123) (Rattus norvegicus (Rat)).